The following is a 1038-amino-acid chain: Bone morphogenetic protein receptor type-2 (1038 aa).

The first 26 residues, 1–26, serve as a signal peptide directing secretion; the sequence is MTSSLQRPWRVPWLPWTILLVSTAAA. The Extracellular segment spans residues 27–150; it reads SQNQERLCAF…PPHSFNRDET (124 aa). Cystine bridges form between C34/C66, C60/C84, C94/C117, C99/C116, and C118/C123. N55 is a glycosylation site (N-linked (GlcNAc...) asparagine). N-linked (GlcNAc...) asparagine glycosylation occurs at N110. N126 is a glycosylation site (N-linked (GlcNAc...) asparagine). A helical transmembrane segment spans residues 151 to 171; that stretch reads IIIALASVSVLAVLIVALCFG. Over 172–1038 the chain is Cytoplasmic; that stretch reads YRMLTGDRKQ…VSKDIGMNCL (867 aa). The Protein kinase domain occupies 203–504; it reads LKLLELIGRG…QCAEERMAEL (302 aa). Residues 209–217, K230, and 280–282 each bind ATP; these read IGRGRYGAV and EYY. Residue D333 is the Proton acceptor of the active site. ATP contacts are provided by residues 337-338 and D351; that span reads RN. At T379 the chain carries Phosphothreonine. At S586 the chain carries Phosphoserine. Residues 593–626 are disordered; sequence QAQARIPSPETSVTSLSTNTTTTNTTGLTPSTGM. The segment covering 603–626 has biased composition (low complexity); sequence TSVTSLSTNTTTTNTTGLTPSTGM. Phosphoserine occurs at positions 680 and 681. Disordered regions lie at residues 746 to 770 and 872 to 972; these read PKQQ…KEPR and RREQ…EKIK. Positions 872-896 are enriched in basic and acidic residues; sequence RREQQAGHDEGVLDRLVDRRERPLE. Over residues 937 to 964 the composition is skewed to polar residues; that stretch reads RPNSLDLSATNVLDGSSIQIGESTQDGK.

This sequence belongs to the protein kinase superfamily. TKL Ser/Thr protein kinase family. TGFB receptor subfamily. Interacts with GDF5. Interacts with BMP4. Interacts with SCUBE3. Interacts with TSC22D1/TSC-22. Interacts with activin A/INHBA. Mg(2+) is required as a cofactor. Requires Mn(2+) as cofactor. In terms of tissue distribution, highly expressed in heart and liver.

The protein resides in the cell membrane. The catalysed reaction is L-threonyl-[receptor-protein] + ATP = O-phospho-L-threonyl-[receptor-protein] + ADP + H(+). It carries out the reaction L-seryl-[receptor-protein] + ATP = O-phospho-L-seryl-[receptor-protein] + ADP + H(+). On ligand binding, forms a receptor complex consisting of two type II and two type I transmembrane serine/threonine kinases. Type II receptors phosphorylate and activate type I receptors which autophosphorylate, then bind and activate SMAD transcriptional regulators. Can also mediate signaling through the activation of the p38MAPK cascade. Binds to BMP7, BMP2 and, less efficiently, BMP4. Binding is weak but enhanced by the presence of type I receptors for BMPs. Mediates induction of adipogenesis by GDF6. Promotes signaling also by binding to activin A/INHBA. The polypeptide is Bone morphogenetic protein receptor type-2 (BMPR2) (Homo sapiens (Human)).